Consider the following 298-residue polypeptide: Protein ABIL1 (298 aa).

This sequence belongs to the ABI family. Binds SCAR2. As to expression, expressed in seedlings, roots, hypocotyls, cotyledons, leaves, stems, and flowers.

The protein localises to the cytoplasm. The protein resides in the cytoskeleton. Its function is as follows. Involved in regulation of actin and microtubule organization. Part of a WAVE complex that activates the Arp2/3 complex. This Arabidopsis thaliana (Mouse-ear cress) protein is Protein ABIL1 (ABIL1).